The following is a 356-amino-acid chain: ATP-dependent 6-phosphofructokinase (356 aa).

ATP-binding positions include G15, 78–79 (KG), and 115–118 (GEGT). Mg(2+) is bound at residue E116. Substrate contacts are provided by residues 138–140 (TID), R175, 182–184 (MGR), E235, R272, and 278–281 (HLQR). D140 functions as the Proton acceptor in the catalytic mechanism.

This sequence belongs to the phosphofructokinase type A (PFKA) family. Mixed-substrate PFK group III subfamily. In terms of assembly, homodimer or homotetramer. The cofactor is Mg(2+).

Its subcellular location is the cytoplasm. It carries out the reaction beta-D-fructose 6-phosphate + ATP = beta-D-fructose 1,6-bisphosphate + ADP + H(+). It functions in the pathway carbohydrate degradation; glycolysis; D-glyceraldehyde 3-phosphate and glycerone phosphate from D-glucose: step 3/4. Catalyzes the phosphorylation of D-fructose 6-phosphate to fructose 1,6-bisphosphate by ATP, the first committing step of glycolysis. The protein is ATP-dependent 6-phosphofructokinase of Chloroflexus aurantiacus (strain ATCC 29366 / DSM 635 / J-10-fl).